Consider the following 191-residue polypeptide: GDP-mannose pyrophosphatase (191 aa).

GDP-alpha-D-mannose contacts are provided by residues Tyr17, 38-40 (KRE), Arg67, and 85-87 (AGL). The Nudix hydrolase domain maps to 43-180 (DRGNGATILL…EIRDGKTVLL (138 aa)). Positions 85, 100, and 104 each coordinate Mg(2+). The short motif at 86-106 (GLLDNDEPEACIRKEAIEETG) is the Nudix box element. GDP-alpha-D-mannose is bound by residues Glu104, Glu127, 150–151 (DE), and Lys176. Residue Glu151 coordinates Mg(2+).

The protein belongs to the Nudix hydrolase family. NudK subfamily. Homodimer. Mg(2+) is required as a cofactor.

It carries out the reaction GDP-alpha-D-mannose + H2O = alpha-D-mannose 1-phosphate + GMP + 2 H(+). Its function is as follows. Nucleoside diphosphate sugar hydrolase that hydrolyzes GDP-mannose as its preferred substrate, yielding GMP and mannose-1-phosphate. In Citrobacter koseri (strain ATCC BAA-895 / CDC 4225-83 / SGSC4696), this protein is GDP-mannose pyrophosphatase (nudK).